Here is an 89-residue protein sequence, read N- to C-terminus: Large ribosomal subunit protein bL27 (89 aa).

Residues 1–24 (MAHKKAGGSSRNGRDSAGRRLGVK) are disordered.

Belongs to the bacterial ribosomal protein bL27 family.

The polypeptide is Large ribosomal subunit protein bL27 (Maricaulis maris (strain MCS10) (Caulobacter maris)).